A 147-amino-acid polypeptide reads, in one-letter code: UPF0306 protein YhbP (147 aa).

The protein belongs to the UPF0306 family.

In Escherichia coli O157:H7 (strain EC4115 / EHEC), this protein is UPF0306 protein YhbP.